Here is a 162-residue protein sequence, read N- to C-terminus: Endoribonuclease YbeY (162 aa).

3 residues coordinate Zn(2+): His117, His121, and His127.

It belongs to the endoribonuclease YbeY family. Zn(2+) is required as a cofactor.

Its subcellular location is the cytoplasm. In terms of biological role, single strand-specific metallo-endoribonuclease involved in late-stage 70S ribosome quality control and in maturation of the 3' terminus of the 16S rRNA. In Francisella tularensis subsp. novicida (strain U112), this protein is Endoribonuclease YbeY.